A 407-amino-acid chain; its full sequence is 3-oxoacyl-[acyl-carrier-protein] synthase 1 (407 aa).

The Ketosynthase family 3 (KS3) domain occupies 1-405; that stretch reads MKRVVITGLG…GTNVSLIIKK (405 aa). Active-site for beta-ketoacyl synthase activity residues include cysteine 164, histidine 299, and histidine 335.

It belongs to the thiolase-like superfamily. Beta-ketoacyl-ACP synthases family. In terms of assembly, homodimer.

Its subcellular location is the cytoplasm. The catalysed reaction is a fatty acyl-[ACP] + malonyl-[ACP] + H(+) = a 3-oxoacyl-[ACP] + holo-[ACP] + CO2. The enzyme catalyses (3Z)-decenoyl-[ACP] + malonyl-[ACP] + H(+) = 3-oxo-(5Z)-dodecenoyl-[ACP] + holo-[ACP] + CO2. It participates in lipid metabolism; fatty acid biosynthesis. Functionally, involved in the type II fatty acid elongation cycle. Catalyzes the elongation of a wide range of acyl-ACP by the addition of two carbons from malonyl-ACP to an acyl acceptor. Can also use unsaturated fatty acids. Catalyzes a key reaction in unsaturated fatty acid (UFA) synthesis, the elongation of the cis-3-decenoyl-ACP produced by FabA. This chain is 3-oxoacyl-[acyl-carrier-protein] synthase 1 (fabB), found in Buchnera aphidicola subsp. Baizongia pistaciae (strain Bp).